The sequence spans 679 residues: Methionine--tRNA ligase (679 aa).

Residues 14-24 (PYANGSIHLGH) carry the 'HIGH' region motif. Zn(2+)-binding residues include Cys145, Cys148, Cys158, and Cys161. A 'KMSKS' region motif is present at residues 331 to 335 (KMSKS). Residue Lys334 coordinates ATP. Residues 577–679 (TFAAVDLRVA…SGAKPGQRIK (103 aa)) form the tRNA-binding domain.

Belongs to the class-I aminoacyl-tRNA synthetase family. MetG type 1 subfamily. Homodimer. Requires Zn(2+) as cofactor.

It localises to the cytoplasm. It catalyses the reaction tRNA(Met) + L-methionine + ATP = L-methionyl-tRNA(Met) + AMP + diphosphate. Its function is as follows. Is required not only for elongation of protein synthesis but also for the initiation of all mRNA translation through initiator tRNA(fMet) aminoacylation. This is Methionine--tRNA ligase from Pseudomonas putida (strain ATCC 47054 / DSM 6125 / CFBP 8728 / NCIMB 11950 / KT2440).